The following is a 628-amino-acid chain: Leucine-rich repeat and fibronectin type-III domain-containing protein 3 (628 aa).

A signal peptide spans M1–A16. Residues S17–T540 are Extracellular-facing. One can recognise an LRRNT domain in the interval P19–R59. LRR repeat units lie at residues R60–T83, G84–D105, A108–G129, N132–D153, T157–R178, N181–R202, and K205–S226. One can recognise an LRRCT domain in the interval N249 to P295. In terms of domain architecture, Ig-like spans P295–T382. Cysteines 317 and 366 form a disulfide. 2 N-linked (GlcNAc...) asparagine glycosylation sites follow: N348 and N393. Residues E380–V433 are disordered. The segment covering P410 to P428 has biased composition (low complexity). One can recognise a Fibronectin type-III domain in the interval P427–A525. The chain crosses the membrane as a helical span at residues M541–L561. The Cytoplasmic portion of the chain corresponds to M562–P628. The disordered stretch occupies residues Q570–H609. Positions P580 to G590 are enriched in polar residues. Over residues M595–S604 the composition is skewed to pro residues.

Belongs to the LRFN family. Can form heteromeric complexes with LRFN1, LRFN2, LRFN4 and LRFN5. Able to form homomeric complexes across cell junctions, between adjacent cells. Does not interact with DLG4. Post-translationally, N-glycosylated.

Its subcellular location is the cell membrane. The protein resides in the cell projection. The protein localises to the axon. It localises to the dendrite. It is found in the synapse. Its subcellular location is the presynaptic cell membrane. The protein resides in the postsynaptic cell membrane. In terms of biological role, cell adhesion molecule that mediates homophilic cell-cell adhesion in a Ca(2+)-independent manner. Promotes neurite outgrowth in hippocampal neurons. The protein is Leucine-rich repeat and fibronectin type-III domain-containing protein 3 (LRFN3) of Bos taurus (Bovine).